The primary structure comprises 297 residues: Large ribosomal subunit protein uL15m (297 aa).

A mitochondrion-targeting transit peptide spans 1–22; the sequence is MAGPVRGAAGPWALDLLRALPR. A disordered region spans residues 27–68; the sequence is NLRPNPGSRKPERRRRGQRRGRKCGRGHKGERQRGTRPRLGF. Residues 37–53 show a composition bias toward basic residues; that stretch reads PERRRRGQRRGRKCGRG.

It belongs to the universal ribosomal protein uL15 family. In terms of assembly, component of the mitochondrial ribosome large subunit (39S) which comprises a 16S rRNA and about 50 distinct proteins.

It localises to the mitochondrion. This Bos taurus (Bovine) protein is Large ribosomal subunit protein uL15m (MRPL15).